Consider the following 98-residue polypeptide: NADH-ubiquinone oxidoreductase chain 4L (98 aa).

The next 3 membrane-spanning stretches (helical) occupy residues 1–21 (MSMV…GMLV), 29–49 (SLLC…VTIL), and 61–81 (IILL…LVMV).

This sequence belongs to the complex I subunit 4L family. In terms of assembly, core subunit of respiratory chain NADH dehydrogenase (Complex I) which is composed of 45 different subunits.

It localises to the mitochondrion inner membrane. It catalyses the reaction a ubiquinone + NADH + 5 H(+)(in) = a ubiquinol + NAD(+) + 4 H(+)(out). Core subunit of the mitochondrial membrane respiratory chain NADH dehydrogenase (Complex I) which catalyzes electron transfer from NADH through the respiratory chain, using ubiquinone as an electron acceptor. Part of the enzyme membrane arm which is embedded in the lipid bilayer and involved in proton translocation. This is NADH-ubiquinone oxidoreductase chain 4L (MT-ND4L) from Odobenus rosmarus rosmarus (Atlantic walrus).